A 176-amino-acid chain; its full sequence is Ribosome maturation factor RimM (176 aa).

Residues 100–173 (EGEFHLLDLV…WLRLTPPPGL (74 aa)) form the PRC barrel domain.

It belongs to the RimM family. Binds ribosomal protein uS19.

It is found in the cytoplasm. An accessory protein needed during the final step in the assembly of 30S ribosomal subunit, possibly for assembly of the head region. Essential for efficient processing of 16S rRNA. May be needed both before and after RbfA during the maturation of 16S rRNA. It has affinity for free ribosomal 30S subunits but not for 70S ribosomes. In Prochlorococcus marinus (strain MIT 9303), this protein is Ribosome maturation factor RimM.